We begin with the raw amino-acid sequence, 113 residues long: Iron-sulfur cluster insertion protein ErpA (113 aa).

Residues Cys41, Cys105, and Cys107 each coordinate iron-sulfur cluster.

The protein belongs to the HesB/IscA family. In terms of assembly, homodimer. The cofactor is iron-sulfur cluster.

Functionally, required for insertion of 4Fe-4S clusters for at least IspG. This is Iron-sulfur cluster insertion protein ErpA from Aliivibrio fischeri (strain ATCC 700601 / ES114) (Vibrio fischeri).